A 148-amino-acid polypeptide reads, in one-letter code: MRAVVQRSLEAKVTIEGNTVGTIDHGFVVLLGVGPTDTEAESDYLAEKISKLRVFSDPVGKMNLALADVGGQVLSISQFTLYADTHRGNRPSFTGAADPALGDRLYQAFNAKLKALGVPVATGEFGGDMQVSLTNDGPVTILFDTEAK.

A Gly-cisPro motif, important for rejection of L-amino acids motif is present at residues 137–138 (GP).

This sequence belongs to the DTD family. As to quaternary structure, homodimer.

The protein localises to the cytoplasm. The enzyme catalyses glycyl-tRNA(Ala) + H2O = tRNA(Ala) + glycine + H(+). It catalyses the reaction a D-aminoacyl-tRNA + H2O = a tRNA + a D-alpha-amino acid + H(+). Functionally, an aminoacyl-tRNA editing enzyme that deacylates mischarged D-aminoacyl-tRNAs. Also deacylates mischarged glycyl-tRNA(Ala), protecting cells against glycine mischarging by AlaRS. Acts via tRNA-based rather than protein-based catalysis; rejects L-amino acids rather than detecting D-amino acids in the active site. By recycling D-aminoacyl-tRNA to D-amino acids and free tRNA molecules, this enzyme counteracts the toxicity associated with the formation of D-aminoacyl-tRNA entities in vivo and helps enforce protein L-homochirality. The chain is D-aminoacyl-tRNA deacylase from Lacticaseibacillus casei (strain BL23) (Lactobacillus casei).